The chain runs to 435 residues: Monodictyphenone cluster transcription factor (435 aa).

Residues 23–50 (CHACALSKLKCSQDKPTCSRCVKRGTAC) constitute a DNA-binding region (zn(2)-C6 fungal-type). Positions 117-147 (QYHQRTPSYPESIPSLLSSTGPGTSATSPLT) are disordered. The segment covering 130–147 (PSLLSSTGPGTSATSPLT) has biased composition (low complexity).

It localises to the nucleus. In terms of biological role, transcription factor that regulates the expression of the gene cluster that mediates the biosynthesis of monodictyphenone, a prenyl xanthone derivative. The polypeptide is Monodictyphenone cluster transcription factor (Emericella nidulans (strain FGSC A4 / ATCC 38163 / CBS 112.46 / NRRL 194 / M139) (Aspergillus nidulans)).